Reading from the N-terminus, the 190-residue chain is Segregation and condensation protein B (190 aa).

The protein belongs to the ScpB family. As to quaternary structure, homodimer. Homodimerization may be required to stabilize the binding of ScpA to the Smc head domains. Component of a cohesin-like complex composed of ScpA, ScpB and the Smc homodimer, in which ScpA and ScpB bind to the head domain of Smc. The presence of the three proteins is required for the association of the complex with DNA.

The protein localises to the cytoplasm. Its function is as follows. Participates in chromosomal partition during cell division. May act via the formation of a condensin-like complex containing Smc and ScpA that pull DNA away from mid-cell into both cell halves. This is Segregation and condensation protein B from Bacillus cereus (strain ATCC 14579 / DSM 31 / CCUG 7414 / JCM 2152 / NBRC 15305 / NCIMB 9373 / NCTC 2599 / NRRL B-3711).